Consider the following 233-residue polypeptide: 2,3-bisphosphoglycerate-dependent phosphoglycerate mutase (233 aa).

Residues 8–15 (RHGESEWN), 21–22 (TG), Arg60, 87–90 (ERHY), Lys98, 114–115 (RR), and 183–184 (GN) contribute to the substrate site. The Tele-phosphohistidine intermediate role is filled by His9. Glu87 (proton donor/acceptor) is an active-site residue.

The protein belongs to the phosphoglycerate mutase family. BPG-dependent PGAM subfamily.

It carries out the reaction (2R)-2-phosphoglycerate = (2R)-3-phosphoglycerate. Its pathway is carbohydrate degradation; glycolysis; pyruvate from D-glyceraldehyde 3-phosphate: step 3/5. Functionally, catalyzes the interconversion of 2-phosphoglycerate and 3-phosphoglycerate. This chain is 2,3-bisphosphoglycerate-dependent phosphoglycerate mutase, found in Lactococcus lactis subsp. cremoris (strain MG1363).